Reading from the N-terminus, the 427-residue chain is Enolase (427 aa).

Position 163 (Gln-163) interacts with (2R)-2-phosphoglycerate. Glu-205 serves as the catalytic Proton donor. Asp-242, Glu-285, and Asp-312 together coordinate Mg(2+). (2R)-2-phosphoglycerate is bound by residues Lys-337, Arg-366, Ser-367, and Lys-388. Residue Lys-337 is the Proton acceptor of the active site.

It belongs to the enolase family. It depends on Mg(2+) as a cofactor.

It localises to the cytoplasm. It is found in the secreted. Its subcellular location is the cell surface. It catalyses the reaction (2R)-2-phosphoglycerate = phosphoenolpyruvate + H2O. It functions in the pathway carbohydrate degradation; glycolysis; pyruvate from D-glyceraldehyde 3-phosphate: step 4/5. Functionally, catalyzes the reversible conversion of 2-phosphoglycerate (2-PG) into phosphoenolpyruvate (PEP). It is essential for the degradation of carbohydrates via glycolysis. The sequence is that of Enolase from Bradyrhizobium diazoefficiens (strain JCM 10833 / BCRC 13528 / IAM 13628 / NBRC 14792 / USDA 110).